The sequence spans 214 residues: NADH-quinone oxidoreductase subunit C (214 aa).

It belongs to the complex I 30 kDa subunit family. In terms of assembly, NDH-1 is composed of 14 different subunits. Subunits NuoB, C, D, E, F, and G constitute the peripheral sector of the complex.

Its subcellular location is the cell inner membrane. It catalyses the reaction a quinone + NADH + 5 H(+)(in) = a quinol + NAD(+) + 4 H(+)(out). Functionally, NDH-1 shuttles electrons from NADH, via FMN and iron-sulfur (Fe-S) centers, to quinones in the respiratory chain. The immediate electron acceptor for the enzyme in this species is believed to be ubiquinone. Couples the redox reaction to proton translocation (for every two electrons transferred, four hydrogen ions are translocated across the cytoplasmic membrane), and thus conserves the redox energy in a proton gradient. The chain is NADH-quinone oxidoreductase subunit C from Francisella tularensis subsp. holarctica (strain LVS).